The chain runs to 189 residues: Mercury resistance operon ORF3 (189 aa).

Residues 1 to 27 (MTSPSPTARRTRLRRRTALALAAAATA) constitute a signal peptide (tat-type signal). Residues 38–189 (TKANTPATRA…IQDALKKAGA (152 aa)) enclose the Thioredoxin domain.

Post-translationally, predicted to be exported by the Tat system. The position of the signal peptide cleavage has not been experimentally proven.

The protein localises to the secreted. In terms of biological role, probable mercury binding protein. The chain is Mercury resistance operon ORF3 from Streptomyces lividans.